Here is a 510-residue protein sequence, read N- to C-terminus: MDIRAAEISAILKDQIKNFGQEAEVTEVGQVLSVGDGIARVYGLDNVQAGEMVEFENGTRGMALNLETDNVGIVIFGADREIKEGQTVKRTRSIVDTPVGKGLLGRVVDALGNPIDGKGPIVATERKRVDVKAPGIIPRKSVHEPMATGLKSIDALIPIGRGQRELIIGDRQTGKTAIALDTILNQKPLNVEGAPEGQKLYCVYVAIGQKRSTVAQFVKVLEEQGALEYSIVVAATASDPAPMQYIAPFTGCTMGEYFRDNGMHAVIIYDDLSKQAVAYRQMSLLLRRPPGREAYPGDVFYLHSRLLERAAKLNDDEGNGSLTALPVIETQANDVSAYIPTNVISITDGQIFLETDLFFQGIRPAVNVGLSVSRVGSSAQTKAMKKVAGKIKGELAQYREMAAFAQFGSDLDASTQRLLNRGSRLTELLKQPQFSPLKMEEQVVVIYAGVNGYLDPLPVAKVRAFEDGLLSLLRGKNVEILNAIRDSRDLSDDTAGKLKAVVEAYAKTFA.

169–176 contributes to the ATP binding site; it reads GDRQTGKT.

The protein belongs to the ATPase alpha/beta chains family. In terms of assembly, F-type ATPases have 2 components, CF(1) - the catalytic core - and CF(0) - the membrane proton channel. CF(1) has five subunits: alpha(3), beta(3), gamma(1), delta(1), epsilon(1). CF(0) has four main subunits: a(1), b(1), b'(1) and c(9-12).

The protein localises to the cell inner membrane. The catalysed reaction is ATP + H2O + 4 H(+)(in) = ADP + phosphate + 5 H(+)(out). Its function is as follows. Produces ATP from ADP in the presence of a proton gradient across the membrane. The alpha chain is a regulatory subunit. The polypeptide is ATP synthase subunit alpha (Rhodopseudomonas palustris (strain BisA53)).